The following is a 129-amino-acid chain: M-zodatoxin-Lt8i (129 aa).

A signal peptide spans 1–20; sequence MKYFVVALALVAAFACIAES. Positions 21–60 are excised as a propeptide; it reads KPAESEHELAEVEEENELADLEDAVWLEHLADLSDLEEAR.

Belongs to the cationic peptide 06 (cytoinsectotoxin) family. Expressed by the venom gland.

It localises to the secreted. Insecticidal, cytolytic and antimicrobial peptide. Forms voltage-dependent, ion-permeable channels in membranes. At high concentration causes cell membrane lysis. The polypeptide is M-zodatoxin-Lt8i (cit 1-6) (Lachesana tarabaevi (Spider)).